The chain runs to 153 residues: ORM1-like protein 2 (153 aa).

The Cytoplasmic segment spans residues 1 to 21 (MNVGVAHSEVNPNTRVMNSRG). 2 consecutive transmembrane segments (helical) span residues 22 to 42 (IWLA…SIPF) and 43 to 63 (FSIP…TYVF). Residues 64-105 (LHTVKGTPFETPDQGKARLLTHWEQMDYGLQFTSSRKFLSIS) lie on the Cytoplasmic side of the membrane. A helical transmembrane segment spans residues 106–126 (PIVLYLLASFYTKYDAAHFLI). The Extracellular segment spans residues 127 to 153 (NTASLLSVLLPKLPQFHGVRVFGINKY).

The protein belongs to the ORM family. Ceramide-sensitive subunit of the serine palmitoyltransferase (SPT) complex, which is also composed of SPTLC1, SPTLC2/3 and SPTSSA/B. As to expression, widely expressed. Expressed in adult and fetal heart, brain, lung, liver, skeletal muscle and kidney. Expressed in adult pancreas and placenta and in fetal spleen abd thymus.

Its subcellular location is the endoplasmic reticulum membrane. Functionally, plays an essential role in the homeostatic regulation of sphingolipid de novo biosynthesis by modulating the activity of the serine palmitoyltransferase (SPT) in response to ceramide levels. When complexed to SPT, the binding of ceramides to its N-terminus stabilizes a conformation that block SPT substrate entry, hence preventing SPT catalytic activity. Through this mechanism, maintains ceramide levels at sufficient concentrations for the production of complex sphingolipids, but which prevents the accumulation of ceramides to levels that trigger apoptosis. The chain is ORM1-like protein 2 (ORMDL2) from Homo sapiens (Human).